Reading from the N-terminus, the 231-residue chain is UPF0653 protein C607.02c (231 aa).

Disordered stretches follow at residues 1–33 (MPTK…VDDN), 47–68 (YHES…KKDY), 93–132 (SFKS…ENFE), and 147–178 (IESR…APPE). The span at 9 to 27 (SVLEAERKKIGLDHAPKED) shows a compositional bias: basic and acidic residues. Composition is skewed to basic residues over residues 53 to 67 (KEIK…KKKD) and 109 to 119 (EKKKIAKRKEK).

It belongs to the UPF0653 family.

The protein localises to the nucleus. It localises to the nucleolus. The polypeptide is UPF0653 protein C607.02c (Schizosaccharomyces pombe (strain 972 / ATCC 24843) (Fission yeast)).